Consider the following 80-residue polypeptide: Cytochrome c oxidase subunit 7B, mitochondrial (80 aa).

The N-terminal 24 residues, 1–24, are a transit peptide targeting the mitochondrion; that stretch reads MLPLAKNALSRLQVRSIQQVVARQ. Residues 25 to 39 are Mitochondrial matrix-facing; that stretch reads SHQKRAPSFHDKYGN. Residues 40–60 traverse the membrane as a helical segment; it reads AILAGGAIFCVSTWTYTATQI. The Mitochondrial intermembrane segment spans residues 61–80; it reads GIEWNMSPVGRVTPKEWRDQ.

This sequence belongs to the cytochrome c oxidase VIIb family. In terms of assembly, component of the cytochrome c oxidase (complex IV, CIV), a multisubunit enzyme composed of 14 subunits. The complex is composed of a catalytic core of 3 subunits MT-CO1, MT-CO2 and MT-CO3, encoded in the mitochondrial DNA, and 11 supernumerary subunits COX4I, COX5A, COX5B, COX6A, COX6B, COX6C, COX7A, COX7B, COX7C, COX8 and NDUFA4, which are encoded in the nuclear genome. The complex exists as a monomer or a dimer and forms supercomplexes (SCs) in the inner mitochondrial membrane with NADH-ubiquinone oxidoreductase (complex I, CI) and ubiquinol-cytochrome c oxidoreductase (cytochrome b-c1 complex, complex III, CIII), resulting in different assemblies (supercomplex SCI(1)III(2)IV(1) and megacomplex MCI(2)III(2)IV(2)).

The protein localises to the mitochondrion inner membrane. It functions in the pathway energy metabolism; oxidative phosphorylation. Its function is as follows. Component of the cytochrome c oxidase, the last enzyme in the mitochondrial electron transport chain which drives oxidative phosphorylation. The respiratory chain contains 3 multisubunit complexes succinate dehydrogenase (complex II, CII), ubiquinol-cytochrome c oxidoreductase (cytochrome b-c1 complex, complex III, CIII) and cytochrome c oxidase (complex IV, CIV), that cooperate to transfer electrons derived from NADH and succinate to molecular oxygen, creating an electrochemical gradient over the inner membrane that drives transmembrane transport and the ATP synthase. Cytochrome c oxidase is the component of the respiratory chain that catalyzes the reduction of oxygen to water. Electrons originating from reduced cytochrome c in the intermembrane space (IMS) are transferred via the dinuclear copper A center (CU(A)) of subunit 2 and heme A of subunit 1 to the active site in subunit 1, a binuclear center (BNC) formed by heme A3 and copper B (CU(B)). The BNC reduces molecular oxygen to 2 water molecules using 4 electrons from cytochrome c in the IMS and 4 protons from the mitochondrial matrix. Plays a role in proper central nervous system (CNS) development in vertebrates. In Mus musculus (Mouse), this protein is Cytochrome c oxidase subunit 7B, mitochondrial (Cox7b).